We begin with the raw amino-acid sequence, 876 residues long: Leucine--tRNA ligase (876 aa).

A 'HIGH' region motif is present at residues 43–53 (PYPSGRIHMGH). The 'KMSKS' region motif lies at 632 to 636 (KMSKS). Lysine 635 provides a ligand contact to ATP.

The protein belongs to the class-I aminoacyl-tRNA synthetase family.

It is found in the cytoplasm. The catalysed reaction is tRNA(Leu) + L-leucine + ATP = L-leucyl-tRNA(Leu) + AMP + diphosphate. The sequence is that of Leucine--tRNA ligase from Rhodopseudomonas palustris (strain TIE-1).